The sequence spans 1090 residues: UPF0507 protein EC1118_1M3_1541g (1090 aa).

Positions 289–436 constitute a VPS9 domain; the sequence is FSVNQLLTDF…FEDFNKNTGN (148 aa).

Belongs to the UPF0507 family.

The sequence is that of UPF0507 protein EC1118_1M3_1541g from Saccharomyces cerevisiae (strain Lalvin EC1118 / Prise de mousse) (Baker's yeast).